The chain runs to 315 residues: MSQPTPAVRTFQDLILALQNYWAEQGCVVLQPYDMEVGAGTFHTATFLRAVGPETWNAAYVQPSRRPADGRYGENPNRLQHYYQFQVVLKPNPANFQELYLGSLKAIGLDPLVHDIRFVEDNWESPTLGAWGLGWEIWLNGMEVTQFTYFQQVGGIECYPVTGEITYGLERLAMYLQGVDSVYDLVWADGPFGKVTYGDVFHQNEVEQSTYNFEHANVEKLFELFDFYESEANRLIKLDLPLPTYEMVLKASHTFNLLDARRAISVTERQRYILRVRTLARDVAQSYLQARARLGFPMASPELRDEVLAKLEAAQ.

This sequence belongs to the class-II aminoacyl-tRNA synthetase family. In terms of assembly, tetramer of two alpha and two beta subunits.

Its subcellular location is the cytoplasm. The enzyme catalyses tRNA(Gly) + glycine + ATP = glycyl-tRNA(Gly) + AMP + diphosphate. This chain is Glycine--tRNA ligase alpha subunit, found in Pseudomonas entomophila (strain L48).